Consider the following 322-residue polypeptide: Mycothiol acetyltransferase (322 aa).

N-acetyltransferase domains are found at residues 5–150 and 160–322; these read SWLR…DPDD and VTIR…PARG. Glu-36 provides a ligand contact to 1D-myo-inositol 2-(L-cysteinylamino)-2-deoxy-alpha-D-glucopyranoside. Acetyl-CoA is bound by residues 79–81 and 87–92; these read LVV and RRGVGT. 1D-myo-inositol 2-(L-cysteinylamino)-2-deoxy-alpha-D-glucopyranoside is bound by residues Glu-187, Lys-226, and Glu-252. Residue 256–258 coordinates acetyl-CoA; it reads VGV. Tyr-290 is a 1D-myo-inositol 2-(L-cysteinylamino)-2-deoxy-alpha-D-glucopyranoside binding site. Residue 295 to 300 participates in acetyl-CoA binding; sequence NARAVR.

It belongs to the acetyltransferase family. MshD subfamily. In terms of assembly, monomer.

It catalyses the reaction 1D-myo-inositol 2-(L-cysteinylamino)-2-deoxy-alpha-D-glucopyranoside + acetyl-CoA = mycothiol + CoA + H(+). In terms of biological role, catalyzes the transfer of acetyl from acetyl-CoA to desacetylmycothiol (Cys-GlcN-Ins) to form mycothiol. This is Mycothiol acetyltransferase from Parafrankia sp. (strain EAN1pec).